A 1372-amino-acid chain; its full sequence is DNA-directed RNA polymerase subunit beta (1372 aa).

It belongs to the RNA polymerase beta chain family. The RNAP catalytic core consists of 2 alpha, 1 beta, 1 beta' and 1 omega subunit. When a sigma factor is associated with the core the holoenzyme is formed, which can initiate transcription.

It carries out the reaction RNA(n) + a ribonucleoside 5'-triphosphate = RNA(n+1) + diphosphate. DNA-dependent RNA polymerase catalyzes the transcription of DNA into RNA using the four ribonucleoside triphosphates as substrates. The chain is DNA-directed RNA polymerase subunit beta from Bradyrhizobium sp. (strain ORS 278).